The primary structure comprises 157 residues: 6,7-dimethyl-8-ribityllumazine synthase 1 (157 aa).

5-amino-6-(D-ribitylamino)uracil contacts are provided by residues phenylalanine 22, 53 to 55 (ALE), and 82 to 84 (TVI). Position 87–88 (87–88 (ET)) interacts with (2S)-2-hydroxy-3-oxobutyl phosphate. Catalysis depends on histidine 90, which acts as the Proton donor. Asparagine 115 provides a ligand contact to 5-amino-6-(D-ribitylamino)uracil. Arginine 129 is a (2S)-2-hydroxy-3-oxobutyl phosphate binding site.

Belongs to the DMRL synthase family. Homopentamer.

The enzyme catalyses (2S)-2-hydroxy-3-oxobutyl phosphate + 5-amino-6-(D-ribitylamino)uracil = 6,7-dimethyl-8-(1-D-ribityl)lumazine + phosphate + 2 H2O + H(+). It participates in cofactor biosynthesis; riboflavin biosynthesis; riboflavin from 2-hydroxy-3-oxobutyl phosphate and 5-amino-6-(D-ribitylamino)uracil: step 1/2. Its function is as follows. Catalyzes the formation of 6,7-dimethyl-8-ribityllumazine by condensation of 5-amino-6-(D-ribitylamino)uracil with 3,4-dihydroxy-2-butanone 4-phosphate. This is the penultimate step in the biosynthesis of riboflavin. In Brucella melitensis biotype 1 (strain ATCC 23456 / CCUG 17765 / NCTC 10094 / 16M), this protein is 6,7-dimethyl-8-ribityllumazine synthase 1 (ribH1).